We begin with the raw amino-acid sequence, 267 residues long: Kafirin PSK8 (267 aa).

The first 19 residues, 1–19 (TKIFALLALHALLVSGTTA), serve as a signal peptide directing secretion.

Belongs to the zein family.

In terms of biological role, major seed storage prolamin. The protein is Kafirin PSK8 of Sorghum bicolor (Sorghum).